A 362-amino-acid chain; its full sequence is Glutamate 5-kinase (362 aa).

Lys3 contacts ATP. Substrate contacts are provided by Ser43, Asp128, and Asn140. Residues 160-161 (TD) and 202-208 (TGGMRTK) each bind ATP. The 82-residue stretch at 267 to 348 (PGTILIDAGA…REIEPILGYS (82 aa)) folds into the PUA domain.

It belongs to the glutamate 5-kinase family.

Its subcellular location is the cytoplasm. The catalysed reaction is L-glutamate + ATP = L-glutamyl 5-phosphate + ADP. Its pathway is amino-acid biosynthesis; L-proline biosynthesis; L-glutamate 5-semialdehyde from L-glutamate: step 1/2. Its function is as follows. Catalyzes the transfer of a phosphate group to glutamate to form L-glutamate 5-phosphate. The protein is Glutamate 5-kinase of Xanthomonas campestris pv. campestris (strain 8004).